Here is a 344-residue protein sequence, read N- to C-terminus: Estradiol 17-beta-dehydrogenase 1 (344 aa).

NAD(+) is bound at residue 3 to 32; that stretch reads STVVLITGCSSGIGLHLAVRLASDRSQSFK. S143 provides a ligand contact to substrate. The active-site Proton acceptor is Y156.

The protein belongs to the short-chain dehydrogenases/reductases (SDR) family. As to quaternary structure, homodimer.

It is found in the cytoplasm. It catalyses the reaction 17beta-estradiol + NAD(+) = estrone + NADH + H(+). It carries out the reaction 17beta-estradiol + NADP(+) = estrone + NADPH + H(+). The protein operates within steroid biosynthesis; estrogen biosynthesis. In terms of biological role, favors the reduction of estrogens and androgens. Uses preferentially NADH. The polypeptide is Estradiol 17-beta-dehydrogenase 1 (Hsd17b1) (Rattus norvegicus (Rat)).